The chain runs to 367 residues: Phosphoribosylaminoimidazole-succinocarboxamide synthase (367 aa).

The protein belongs to the SAICAR synthetase family.

It catalyses the reaction 5-amino-1-(5-phospho-D-ribosyl)imidazole-4-carboxylate + L-aspartate + ATP = (2S)-2-[5-amino-1-(5-phospho-beta-D-ribosyl)imidazole-4-carboxamido]succinate + ADP + phosphate + 2 H(+). Its pathway is purine metabolism; IMP biosynthesis via de novo pathway; 5-amino-1-(5-phospho-D-ribosyl)imidazole-4-carboxamide from 5-amino-1-(5-phospho-D-ribosyl)imidazole-4-carboxylate: step 1/2. In Shewanella sp. (strain MR-7), this protein is Phosphoribosylaminoimidazole-succinocarboxamide synthase.